The following is a 428-amino-acid chain: Probable anion transporter 6 (428 aa).

An N-terminal signal peptide occupies residues 1 to 22 (MKFPKRYAIVLLTFMCTNVCYI). 11 helical membrane-spanning segments follow: residues 47–67 (MILS…GWAA), 74–94 (LVLL…PLDP), 98–118 (ILLV…FPSI), 137–157 (LTTS…PSLV), 164–184 (SVFS…FKFA), 221–241 (ILFS…HYAL), 269–289 (LPYL…DHLI), 301–321 (KLLN…LPLF), 327–347 (AIFC…GFAV), 356–376 (FAGI…IVGV), and 401–421 (TVFF…LIFS).

This sequence belongs to the major facilitator superfamily. Sodium/anion cotransporter (TC 2.A.1.14) family.

It localises to the cell membrane. Probable anion transporter. In Oryza sativa subsp. japonica (Rice), this protein is Probable anion transporter 6 (PHT4;6).